A 255-amino-acid polypeptide reads, in one-letter code: Accessory gland-specific peptide 26Aa (255 aa).

The first 18 residues, 1 to 18 (MNQILLCSQILLLLFAVA), serve as a signal peptide directing secretion. Positions 86-110 (PINNSKSRKNSSTLPSQILTDKPNQ) are disordered. The segment covering 87–110 (INNSKSRKNSSTLPSQILTDKPNQ) has biased composition (polar residues). 3 N-linked (GlcNAc...) asparagine glycosylation sites follow: N88, N95, and N136. 2 disordered regions span residues 177-197 (NAQN…KDIA) and 235-255 (NNPA…PSTT). The segment covering 183–192 (KPTKSCKKRP) has biased composition (basic residues). Residues 245–255 (KSPSEGNPSTT) are compositionally biased toward polar residues.

It undergoes several cleavages as it is secreted and it is further processed in the recipient female. In terms of tissue distribution, main cells of the accessory glands of males.

The protein localises to the secreted. The protein resides in the extracellular space. In terms of biological role, this protein is transferred from male to female's hemolymph during mating, affecting egglaying and behavior after mating. The sequence is that of Accessory gland-specific peptide 26Aa (Acp26Aa) from Drosophila simulans (Fruit fly).